Consider the following 816-residue polypeptide: H(+)/Cl(-) exchange transporter 5 (816 aa).

The Cytoplasmic segment spans residues 1–124; that stretch reads MAMWQGAMDN…WALIHSVSDA (124 aa). 2 helical membrane-spanning segments follow: residues 125–162 and 208–231; these read FSGWLLMLLIGLLSGSLAGLIDISAHWMTDLKEGICTG and VNYFMYVLWALLFAFLAVSLVKVF. Positions 237–241 match the Selectivity filter part_1 motif; it reads GSGIP. Ser-238 contributes to the chloride binding site. Residues 240–247 constitute an intramembrane region (helical); the sequence is IPEIKTIL. Helical transmembrane passes span 256–275 and 281–300; these read LGKWTLVIKTITLVLAVSSG and EGPLVHVACCCGNILCHCFN. Residues 279–283 carry the Selectivity filter part_2 motif; it reads GKEGP. Intramembrane regions (helical) lie at residues 312 to 324 and 328 to 336; these read VLSAAAAAGVSVA and PIGGVLFSL. Helical transmembrane passes span 348–366, 389–414, 422–442, 498–518, and 523–542; these read LWRSFFAALVAAFTLRSIN, LVPFILLGIFGGLWGALFIRTNIAWC, LGKYPVIEVLVVTAITAILAF, MWQLALTLILKIVITIFTFGM, and GLFIPSMAVGAIAGRLLGVG. The Selectivity filter part_3 motif lies at 523-527; the sequence is GLFIP. A chloride-binding site is contributed by Phe-525. The segment at residues 570–584 is an intramembrane region (helical); the sequence is GLYAMVGAAACLGGV. The note=Loop between two helices intramembrane region spans 585–587; the sequence is TRM. Residues 588-599 constitute an intramembrane region (helical); sequence TVSLVVIMFELT. The note=Loop between two helices intramembrane region spans 600-604; sequence GGLEY. A helical membrane pass occupies residues 605 to 622; it reads IVPLMAAAMTSKWVADAL. At 623-816 the chain is on the cytoplasmic side; it reads GREGIYDAHI…NQDPDSILFN (194 aa). Chloride is bound at residue Tyr-628. CBS domains follow at residues 656 to 720 and 752 to 812; these read MKPR…ARKK and ILDL…DPDS. Residues Thr-666, 687-689, and 794-797 contribute to the ATP site; these read YSG and TKKD.

This sequence belongs to the chloride channel (TC 2.A.49) family. ClC-5/CLCN5 subfamily. As to quaternary structure, interacts with NEDD4 and NEDD4L. In terms of processing, ubiquitinated by NEDD4L in the presence of albumin; which promotes endocytosis and proteasomal degradation.

The protein localises to the golgi apparatus membrane. It is found in the endosome membrane. Its subcellular location is the cell membrane. The enzyme catalyses 2 chloride(in) + H(+)(out) = 2 chloride(out) + H(+)(in). Its function is as follows. Proton-coupled chloride transporter. Functions as antiport system and exchanges chloride ions against protons. Important for normal acidification of the endosome lumen. May play an important role in renal tubular function. The CLC channel family contains both chloride channels and proton-coupled anion transporters that exchange chloride or another anion for protons. The absence of conserved gating glutamate residues is typical for family members that function as channels. This chain is H(+)/Cl(-) exchange transporter 5 (CLCN5), found in Pongo abelii (Sumatran orangutan).